The sequence spans 427 residues: Glutamate-1-semialdehyde 2,1-aminomutase (427 aa).

At Lys-265 the chain carries N6-(pyridoxal phosphate)lysine.

It belongs to the class-III pyridoxal-phosphate-dependent aminotransferase family. HemL subfamily. As to quaternary structure, homodimer. Pyridoxal 5'-phosphate is required as a cofactor.

The protein resides in the cytoplasm. It carries out the reaction (S)-4-amino-5-oxopentanoate = 5-aminolevulinate. The protein operates within porphyrin-containing compound metabolism; protoporphyrin-IX biosynthesis; 5-aminolevulinate from L-glutamyl-tRNA(Glu): step 2/2. This is Glutamate-1-semialdehyde 2,1-aminomutase from Bordetella pertussis (strain Tohama I / ATCC BAA-589 / NCTC 13251).